We begin with the raw amino-acid sequence, 456 residues long: MSITKEFDTITAISTPLGEGAIGIVRLSGTDAIAIANKVFKGKNLETVDSHTINYGHIVENNEIIDEVMVSVMRAPKTFTREDVVEINTHGGVAVTNEILQLLIRSGARMAEPGEFTKRAFLNGRIDLTQAEAVMDLIRAKTDKAMTVAVSQLDGSLKNLINNTRQEILNTLAQVEVNIDYPEYDDVEEVTTNLVREKTQEFQALLENLLATAKRGKILREGLSTAIIGRPNVGKSSLLNNLLREEKAIVTDIEGTTRDVIEEYVNIKGVPLKLIDTAGIRDTDDVVEKIGVERSKKALEEADLVLLVLNSSEPLTDQDRTLLDISQNSNRIILLNKTDLPQAIQTEELPEDLIPISVLKNENIDKIEDRINQLFFDNAGLVEKDATYLSNARHISLIEKALESLEAVNQGLELGMPVDLLQVDMTRTWEILGEITGDAAPDELITQLFSQFCLGK.

(6S)-5-formyl-5,6,7,8-tetrahydrofolate contacts are provided by Arg-26, Glu-86, and Arg-125. The TrmE-type G domain maps to 222-376 (GLSTAIIGRP…IEDRINQLFF (155 aa)). Position 232 (Asn-232) interacts with K(+). GTP-binding positions include 232–237 (NVGKSS), 251–257 (TDIEGTT), and 276–279 (DTAG). Ser-236 provides a ligand contact to Mg(2+). Residues Thr-251, Ile-253, and Thr-256 each contribute to the K(+) site. Residue Thr-257 participates in Mg(2+) binding. Residue Lys-456 participates in (6S)-5-formyl-5,6,7,8-tetrahydrofolate binding.

The protein belongs to the TRAFAC class TrmE-Era-EngA-EngB-Septin-like GTPase superfamily. TrmE GTPase family. Homodimer. Heterotetramer of two MnmE and two MnmG subunits. Requires K(+) as cofactor.

The protein localises to the cytoplasm. Its function is as follows. Exhibits a very high intrinsic GTPase hydrolysis rate. Involved in the addition of a carboxymethylaminomethyl (cmnm) group at the wobble position (U34) of certain tRNAs, forming tRNA-cmnm(5)s(2)U34. This chain is tRNA modification GTPase MnmE, found in Streptococcus thermophilus (strain CNRZ 1066).